A 364-amino-acid chain; its full sequence is Photoreceptor outer segment membrane glycoprotein 2 (364 aa).

The Cytoplasmic portion of the chain corresponds to 1–24 (MTVLKVKFTKTKRDKLAQILWILN). Residues 25 to 43 (WVSVVSGIILFSLGLFLKI) form a helical membrane-spanning segment. Residues 44–61 (EIKKRNEVMAKGDINSVP) are Lumenal-facing. Residues 62 to 80 (NMLISVGVIACVVNFLGGK) form a helical membrane-spanning segment. The Cytoplasmic segment spans residues 81 to 99 (ICYDCSDANKFSRWKLIML). A helical membrane pass occupies residues 100 to 123 (PYIICTFCFTFCILLGALMCYTMR). The Lumenal portion of the chain corresponds to 124–264 (NELEESLYLG…LEYYTAIMRS (141 aa)). Asn-229 is a glycosylation site (N-linked (GlcNAc...) asparagine). A helical membrane pass occupies residues 265-290 (IGIAALLIWLFELSVLIGVRYLQTAM). Residues 291-364 (KNVLLQGDLQ…VTAKSIPAAS (74 aa)) lie on the Cytoplasmic side of the membrane.

It belongs to the PRPH2/ROM1 family.

Its subcellular location is the membrane. This is Photoreceptor outer segment membrane glycoprotein 2 from Gallus gallus (Chicken).